A 358-amino-acid chain; its full sequence is Zinc transporter ZIP1 (358 aa).

At 1–7 (MDLLFAK) the chain is on the extracellular side. The chain crosses the membrane as a helical span at residues 8–28 (IICIGIFLVVTTFGCFIPHLM). The Cytoplasmic portion of the chain corresponds to 29–53 (GLYKEKENEEKNKRVKNILSNLNCF). The chain crosses the membrane as a helical span at residues 54 to 74 (GSGFIFSIIMFHLLPETIHII). Over 75–91 (SDHGNIRIFNTSDSQMK) the chain is Extracellular. The chain crosses the membrane as a helical span at residues 92–112 (ILYIFFFVFIGFCMQLGLEYV). The Cytoplasmic segment spans residues 113 to 186 (LPVDTNICCV…GKFLEILTLQ (74 aa)). A helical membrane pass occupies residues 187-207 (SFFLTISLAIHSCIEGMIIGT). Over 208 to 213 (STDVNY) the chain is Extracellular. Residues 214 to 234 (VFISSFCILLHKWIAGVTVSL) form a helical membrane-spanning segment. The Cytoplasmic portion of the chain corresponds to 235 to 246 (SLNSNNMNKTLK). The helical transmembrane segment at 247-267 (AILLLTFVFASPLGIVLGHMA) threads the bilayer. The Extracellular portion of the chain corresponds to 268-273 (KSAGQK). Residues 274 to 294 (VTCLINAVSIGTLLFIGCEIL) form a helical membrane-spanning segment. At 295–310 (LNEIKQNISRKVRLCK) the chain is on the cytoplasmic side. Residues 311–331 (WLSFCFSCLIAFALISFTTSM) traverse the membrane as a helical segment. Topologically, residues 332–358 (APHTHGDIDTHVHVHHHDHDHDHGHNH) are extracellular.

Belongs to the ZIP transporter (TC 2.A.5) family. As to quaternary structure, homodimer.

It localises to the plastid. The protein localises to the apicoplast. The protein resides in the cell membrane. It carries out the reaction Zn(2+)(in) = Zn(2+)(out). It catalyses the reaction Fe(2+)(in) = Fe(2+)(out). Transporter for the divalent zinc cation. Mediates the influx of zinc into cells from extracellular space. Can transport divalent iron ions. Does not transport manganese and cadmium cations. The sequence is that of Zinc transporter ZIP1 from Plasmodium falciparum (isolate 3D7).